We begin with the raw amino-acid sequence, 61 residues long: Metallothionein-1H (61 aa).

Position 1 is an N-acetylmethionine (M1). A beta region spans residues 1–29; that stretch reads MDPNCSCEAGGSCACAGSCKCKKCKCTSC. A divalent metal cation-binding residues include C5, C7, C13, C15, C19, C21, C24, C26, C29, C33, C34, C36, C37, C41, C44, C48, C50, and C57. The segment at 30–61 is alpha; sequence KKSCCSCCPLGCAKCAQGCICKGASEKCSCCA. At S58 the chain carries Phosphoserine. A divalent metal cation-binding residues include C59 and C60.

This sequence belongs to the metallothionein superfamily. Type 1 family. Monomer.

Functionally, metallothioneins have a high content of cysteine residues that bind various heavy metals; these proteins are transcriptionally regulated by both heavy metals and glucocorticoids. The protein is Metallothionein-1H (MT1H) of Homo sapiens (Human).